The chain runs to 236 residues: Small ribosomal subunit protein uS3 (236 aa).

A KH type-2 domain is found at 39–107; that stretch reads IREILHKELK…DVVINIVEIR (69 aa). The interval 213 to 236 is disordered; sequence MAQDKRMNEGGGESSQPRSRRDAA.

The protein belongs to the universal ribosomal protein uS3 family. Part of the 30S ribosomal subunit. Forms a tight complex with proteins S10 and S14.

In terms of biological role, binds the lower part of the 30S subunit head. Binds mRNA in the 70S ribosome, positioning it for translation. The polypeptide is Small ribosomal subunit protein uS3 (Bradyrhizobium sp. (strain BTAi1 / ATCC BAA-1182)).